A 185-amino-acid polypeptide reads, in one-letter code: Pap fimbrial major pilin protein (185 aa).

The signal sequence occupies residues 1–22; the sequence is MIKSVIAGAVAMAVVSFGVNNA. Cysteine 44 and cysteine 83 are disulfide-bonded.

This sequence belongs to the fimbrial protein family.

The protein localises to the secreted. It is found in the fimbrium. In terms of biological role, polymerizes to form the thick (6.8 nm in diameter) rod of the pilus (also called fimbria). The rod is a right-handed helical cylinder with 3.28 PapA subunits per turn. Pili are polar filaments radiating from the surface of the bacterium to a length of 0.5-1.5 micrometers and numbering 100-300 per cell, and enable bacteria to colonize the epithelium of specific host organs. In Escherichia coli, this protein is Pap fimbrial major pilin protein (papA).